The chain runs to 343 residues: 7-epi-alpha-eudesmol synthase ((2E,6E)-farnesyl diphosphate cyclizing) (343 aa).

Residues Asp80 and Asp84 each coordinate Mg(2+). Positions 80 to 84 match the DDXXD motif motif; sequence DDQFD. Arg177 is a substrate binding site. Residues Asn223 and Ser227 each contribute to the Mg(2+) site. Substrate is bound at residue Arg230. Glu231 lines the Mg(2+) pocket. 317-318 contacts substrate; sequence RY.

Belongs to the terpene synthase family. Mg(2+) is required as a cofactor.

It catalyses the reaction (2E,6E)-farnesyl diphosphate + H2O = 7-epi-alpha-eudesmol + diphosphate. The protein operates within secondary metabolite biosynthesis; terpenoid biosynthesis. Catalyzes the conversion of (2E,6E)-farnesyl diphosphate (FPP) to yield the bicyclic sesquiterpenol 7-epi-alpha-eudesmol via a 1,10-cyclization, which requires the abstraction of the pyrophosphate from FPP to yield the (E,E)-germacradienyl cation. The only accepted substrate is (2E,6E)-farnesyl diphosphate (FPP). The protein is 7-epi-alpha-eudesmol synthase ((2E,6E)-farnesyl diphosphate cyclizing) of Streptomyces viridochromogenes (strain DSM 40736 / JCM 4977 / BCRC 1201 / Tue 494).